Reading from the N-terminus, the 174-residue chain is NADH-ubiquinone oxidoreductase chain 6 (174 aa).

A run of 5 helical transmembrane segments spans residues 1–21, 24–44, 47–67, 86–106, and 151–171; these read MTYV…GFSS, SPIY…MIIL, GGAY…MVVF, FEVL…VLWV, and WLVV…IEIT.

It belongs to the complex I subunit 6 family. In terms of assembly, core subunit of respiratory chain NADH dehydrogenase (Complex I) which is composed of 45 different subunits.

Its subcellular location is the mitochondrion inner membrane. The catalysed reaction is a ubiquinone + NADH + 5 H(+)(in) = a ubiquinol + NAD(+) + 4 H(+)(out). Core subunit of the mitochondrial membrane respiratory chain NADH dehydrogenase (Complex I) which catalyzes electron transfer from NADH through the respiratory chain, using ubiquinone as an electron acceptor. Essential for the catalytic activity and assembly of complex I. In Papio hamadryas (Hamadryas baboon), this protein is NADH-ubiquinone oxidoreductase chain 6 (MT-ND6).